Here is an 843-residue protein sequence, read N- to C-terminus: Proto-oncogene vav (843 aa).

One can recognise a Calponin-homology (CH) domain in the interval 1 to 119 (MELWRQCTHW…YTLSALSWTP (119 aa)). A DH domain is found at 194–373 (KRCCCLREIQ…RDLAQCVNEV (180 aa)). The region spanning 402–504 (RPKIDGELKI…WMEQFEMAIS (103 aa)) is the PH domain. The segment at 515 to 564 (GHDFQMFSFEETTSCKACQMLLRGTFYQGYRCYRCRAPAHKECLGRVPPC) adopts a Phorbol-ester/DAG-type zinc-finger fold. The SH3 1 domain occupies 590–658 (LGLPKMEVCQ…PCNRVRPYVH (69 aa)). One can recognise an SH2 domain in the interval 669-763 (WYAGPMERAG…SLDTTLQFPY (95 aa)). The region spanning 780–840 (KYFGTAKARY…PSNYVEEDYS (61 aa)) is the SH3 2 domain. Phosphotyrosine occurs at positions 824 and 842.

In terms of assembly, interacts with SHB. Interacts with APS, DOCK2, GRB2, GRB3, DOCK2, SLA, TEC and ZNF655/VIK. Interacts with SIAH2; without leading to its degradation. Associates with BLNK, PLCG1, GRB2 and NCK1 in a B-cell antigen receptor-dependent fashion. Interacts with CBLB; which inhibits tyrosine phosphorylation and down-regulates activity. May interact with CCPG1. Interacts with CLNK. Interacts with THEMIS2. Interacts with NEK3 and this interaction is prolactin-dependent. Interacts with ITK. Interacts with PTK2B/PYK2. Interacts with HCK. Interacts with PTK2B/PYK2. Interacts (via SH2 domain) with SYK. Interacts with ANKRD54. Interacts with CD6. Interacts with LCP2; this interaction plays a role in TCR-mediated cytokine production. Phosphorylated by FYN. Phosphorylated on tyrosine residues by HCK in response to IFNG and bacterial lipopolysaccharide (LPS).

Couples tyrosine kinase signals with the activation of the Rho/Rac GTPases, thus leading to cell differentiation and/or proliferation. The chain is Proto-oncogene vav (Vav1) from Rattus norvegicus (Rat).